The primary structure comprises 40 residues: Mastoparan-like peptide 12c (40 aa).

The signal sequence occupies residues 1 to 7; sequence MSAEALA. The segment at 1–22 is disordered; that stretch reads MSAEALADPKADPLAGPNPDAD. 4 AXPX repeats span residues 7–10, 11–14, 15–18, and 19–22; these read ADPK, ADPL, AGPN, and PDAD. Positions 8–25 are excised as a propeptide; that stretch reads DPKADPLAGPNPDADPEA. Position 39 is a leucine amide (Leu39).

Belongs to the MCD family. Mastoparan subfamily. Expressed by the venom gland.

The protein localises to the secreted. Shows mast cell degranulation and antimicrobial activities against the Gram-negative bacteria E.coli ATCC 25922 (MIC=6.0 ug/ml), the Gram-positive bacteria S.aureus ATCC 2592 (MIC=3.0 ug/ml) and the fungus C.albicans ATCC 2002 (MIC=12 ug/ml). Exhibits little hemolytic activity against washed human erythrocytes. Its mast cell degranulation activity may be related to the activation of G-protein coupled receptors in mast cells as well as interaction with other proteins located in cell endosomal membranes in the mast cells. The chain is Mastoparan-like peptide 12c from Vespa magnifica (Hornet).